The following is a 512-amino-acid chain: ATP synthase subunit alpha (512 aa).

170 to 177 is an ATP binding site; it reads GDRQTGKT.

The protein belongs to the ATPase alpha/beta chains family. F-type ATPases have 2 components, CF(1) - the catalytic core - and CF(0) - the membrane proton channel. CF(1) has five subunits: alpha(3), beta(3), gamma(1), delta(1), epsilon(1). CF(0) has three main subunits: a(1), b(2) and c(9-12). The alpha and beta chains form an alternating ring which encloses part of the gamma chain. CF(1) is attached to CF(0) by a central stalk formed by the gamma and epsilon chains, while a peripheral stalk is formed by the delta and b chains.

The protein localises to the cell inner membrane. It catalyses the reaction ATP + H2O + 4 H(+)(in) = ADP + phosphate + 5 H(+)(out). Produces ATP from ADP in the presence of a proton gradient across the membrane. The alpha chain is a regulatory subunit. The chain is ATP synthase subunit alpha from Solibacter usitatus (strain Ellin6076).